Reading from the N-terminus, the 172-residue chain is 3-hydroxydecanoyl-[acyl-carrier-protein] dehydratase (172 aa).

His-71 is a catalytic residue.

This sequence belongs to the thioester dehydratase family. FabA subfamily. As to quaternary structure, homodimer.

The protein localises to the cytoplasm. The enzyme catalyses a (3R)-hydroxyacyl-[ACP] = a (2E)-enoyl-[ACP] + H2O. The catalysed reaction is (3R)-hydroxydecanoyl-[ACP] = (2E)-decenoyl-[ACP] + H2O. It carries out the reaction (2E)-decenoyl-[ACP] = (3Z)-decenoyl-[ACP]. It functions in the pathway lipid metabolism; fatty acid biosynthesis. Necessary for the introduction of cis unsaturation into fatty acids. Catalyzes the dehydration of (3R)-3-hydroxydecanoyl-ACP to E-(2)-decenoyl-ACP and then its isomerization to Z-(3)-decenoyl-ACP. Can catalyze the dehydratase reaction for beta-hydroxyacyl-ACPs with saturated chain lengths up to 16:0, being most active on intermediate chain length. The protein is 3-hydroxydecanoyl-[acyl-carrier-protein] dehydratase of Maricaulis maris (strain MCS10) (Caulobacter maris).